Consider the following 531-residue polypeptide: MNHCLVVSHKKLQTFRTFAASKFSSFTKSAQKSIKYSFQFIYQNNPLFVHVAYFALISFAGYGSLKVLKPRDKSNTLKDLDVLFTSVSASTVSSMATVEMEDFSSAQLWVLTILMLIGGEVFTSMLGIHFMRAEFGTKESVSTRDHSPCIDIESITSTKFGPSTQGTKVTVSFSELRMENGGHVEPKTIKFLGFVVMGYLLITNLGGSLLIYLYLNLVPSAHKILKRKGIGIIVFSVFTAISSVGNCGFTPVNENMIIFQKNSILLLLILPQILAGNTLFAPCLRLMVWSLEKITGKKDCRYILEYPKAIGYKHLMSTRESVYLTLTVVSLIILQTVLFLSLEWSSVALDGMSNYQKIVSALFQSVNARHAGESVTDLSNLSSAILVLYTIMMYLPGYTSFLPRHDGEDSKTEKINKRKGLLENWIFSHMSYLAIFVMLICITERDSMATDPLNFNVFSILFEVVSAYGNVGFSVGYSCKRLLNHDARCKDASYGFAGKWSDNGKAILIIVMLFGRLKTFNMKGGRAWKLR.

Residues 1 to 46 lie on the Cytoplasmic side of the membrane; that stretch reads MNHCLVVSHKKLQTFRTFAASKFSSFTKSAQKSIKYSFQFIYQNNP. 2 consecutive transmembrane segments (helical) span residues 47–67 and 108–128; these read LFVH…SLKV and LWVL…MLGI. Topologically, residues 129–190 are cytoplasmic; it reads HFMRAEFGTK…GGHVEPKTIK (62 aa). The next 2 membrane-spanning stretches (helical) occupy residues 191 to 211 and 264 to 284; these read FLGF…SLLI and ILLL…APCL. Residues 285–321 are Cytoplasmic-facing; that stretch reads RLMVWSLEKITGKKDCRYILEYPKAIGYKHLMSTRES. 2 helical membrane-spanning segments follow: residues 322–342 and 383–403; these read VYLT…FLSL and SAIL…SFLP. Over 404-421 the chain is Cytoplasmic; sequence RHDGEDSKTEKINKRKGL. 2 consecutive transmembrane segments (helical) span residues 422-442 and 494-514; these read LENW…LICI and YGFA…VMLF. At 515–530 the chain is on the cytoplasmic side; the sequence is GRLKTFNMKGGRAWKL.

The protein belongs to the TrkH potassium transport family. HKT (TC 2.A.38.3) subfamily. Interacts with CNIH1. In terms of tissue distribution, weakly expressed. In roots, expressed in epidermis, exodermis, cortex, and sieve elements and companion cells of phloem. In mature leaves, expressed in large highly vacuolated cells of the adaxial epidermis, phloem and xylem.

It is found in the endoplasmic reticulum membrane. It localises to the golgi apparatus membrane. The catalysed reaction is Na(+)(in) = Na(+)(out). Functions as a highly-selective sodium transporter. Does not seem to function as sodium-potassium cotransporter. May be involved in turgor changes for rolling and unrolling of leaves in response to environmental variations. The protein is Cation transporter HKT1;3 of Oryza sativa subsp. japonica (Rice).